Consider the following 424-residue polypeptide: Histidine--tRNA ligase (424 aa).

Belongs to the class-II aminoacyl-tRNA synthetase family. In terms of assembly, homodimer.

Its subcellular location is the cytoplasm. It carries out the reaction tRNA(His) + L-histidine + ATP = L-histidyl-tRNA(His) + AMP + diphosphate + H(+). This Salmonella heidelberg (strain SL476) protein is Histidine--tRNA ligase.